The primary structure comprises 143 residues: MQLNNLKPAAGSKHAKRRVGRGIGSGLGKTAGRGHKGQKSRSGGFHKVGFEGGQMPLHRRLPKRGFTSLTKEFTAEVRLGDLAGLPVAEIDLLTLKQAGLVGELVKSAKVILSGSIDKKVTLKGLGATAGAKAAIEAAGGSLA.

The segment at 1-57 is disordered; that stretch reads MQLNNLKPAAGSKHAKRRVGRGIGSGLGKTAGRGHKGQKSRSGGFHKVGFEGGQMPL. Residues 21-31 show a composition bias toward gly residues; the sequence is RGIGSGLGKTA.

Belongs to the universal ribosomal protein uL15 family. In terms of assembly, part of the 50S ribosomal subunit.

Its function is as follows. Binds to the 23S rRNA. In Ralstonia nicotianae (strain ATCC BAA-1114 / GMI1000) (Ralstonia solanacearum), this protein is Large ribosomal subunit protein uL15.